The sequence spans 393 residues: METFLFTSESVNEGHPDKLCDQVSDAVLDACLAQDPESKVACETCTKTNLVMVFGEITTKANIDYEKIVRDTCREIGFVSPDVGLDADNCRVLVNIEQQSPDIAQGVHGHLTKRPEEIGAGDQGHMFGYATDETPELMPLSHVLATKLGARLTEVRKNGTCSWLRPDGKTQVTVEYHNDNGAMVPLRVHTVLISTQHDETVTNDEIARDLKEHVIKPVIPEKYLDENTIFHLNPSGRFVIGGPHGDAGLTGRKIIIDTYGGWGAHGGGAFSGKDPTKVDRSGAYIVRQAAKSIVANGLARRCIVQVSYAIGVPEPLSVFVDTYGTGKIPDKEILNIVKENFDFRPGMISINLDLLRGGNGRFLKTAAYGHFGRDDPDFTWEVVKPLKWDKPEA.

Glu-9 contacts Mg(2+). Residue His-15 coordinates ATP. Residue Glu-43 coordinates K(+). Glu-56 and Gln-99 together coordinate L-methionine. Residues 167–169, 235–238, Asp-246, 252–253, Ala-269, Lys-273, and Lys-277 each bind ATP; these read DGK, SGRF, and RK. Asp-246 contacts L-methionine. Position 277 (Lys-277) interacts with L-methionine.

It belongs to the AdoMet synthase family. As to quaternary structure, homotetramer. Mn(2+) is required as a cofactor. Requires Mg(2+) as cofactor. Co(2+) serves as cofactor. It depends on K(+) as a cofactor. As to expression, mostly expressed in roots. Also present in stems and leaves.

It is found in the cytoplasm. It carries out the reaction L-methionine + ATP + H2O = S-adenosyl-L-methionine + phosphate + diphosphate. It functions in the pathway amino-acid biosynthesis; S-adenosyl-L-methionine biosynthesis; S-adenosyl-L-methionine from L-methionine: step 1/1. Its function is as follows. Catalyzes the formation of S-adenosylmethionine from methionine and ATP. The reaction comprises two steps that are both catalyzed by the same enzyme: formation of S-adenosylmethionine (AdoMet) and triphosphate, and subsequent hydrolysis of the triphosphate. In Solanum lycopersicum (Tomato), this protein is S-adenosylmethionine synthase 2 (SAM2).